We begin with the raw amino-acid sequence, 445 residues long: Tubulin beta chain (445 aa).

Residues 1 to 4 (MREI) carry the MREI motif motif. Gln-11 is a binding site for GTP. The residue at position 40 (Ser-40) is a Phosphoserine. Lys-58 carries the N6-acetyllysine; alternate modification. Lys-58 carries the post-translational modification N6-succinyllysine; alternate. Lys-58 participates in a covalent cross-link: Glycyl lysine isopeptide (Lys-Gly) (interchain with G-Cter in ubiquitin); alternate. Positions 69, 138, 142, 143, and 144 each coordinate GTP. Glu-69 serves as a coordination point for Mg(2+). Ser-172 is subject to Phosphoserine; by CDK1. 2 residues coordinate GTP: Asn-204 and Asn-226. Residues Thr-285 and Thr-290 each carry the phosphothreonine modification. Arg-318 is subject to Omega-N-methylarginine. Lys-324 participates in a covalent cross-link: Glycyl lysine isopeptide (Lys-Gly) (interchain with G-Cter in ubiquitin). Residues 424–445 (QYQDATADEQGEFEEEGEEDEA) form a disordered region. Positions 429–445 (TADEQGEFEEEGEEDEA) are enriched in acidic residues. Residue Glu-438 is modified to 5-glutamyl polyglutamate.

Belongs to the tubulin family. Dimer of alpha and beta chains. A typical microtubule is a hollow water-filled tube with an outer diameter of 25 nm and an inner diameter of 15 nM. Alpha-beta heterodimers associate head-to-tail to form protofilaments running lengthwise along the microtubule wall with the beta-tubulin subunit facing the microtubule plus end conferring a structural polarity. Microtubules usually have 13 protofilaments but different protofilament numbers can be found in some organisms and specialized cells. Interacts with NCKAP5L. Mg(2+) is required as a cofactor. In terms of processing, some glutamate residues at the C-terminus are polyglycylated, resulting in polyglycine chains on the gamma-carboxyl group. Glycylation is mainly limited to tubulin incorporated into axonemes (cilia and flagella) whereas glutamylation is prevalent in neuronal cells, centrioles, axonemes, and the mitotic spindle. Both modifications can coexist on the same protein on adjacent residues, and lowering polyglycylation levels increases polyglutamylation, and reciprocally. Cilia and flagella glycylation is required for their stability and maintenance. Flagella glycylation controls sperm motility. Some glutamate residues at the C-terminus are polyglutamylated, resulting in polyglutamate chains on the gamma-carboxyl group. Polyglutamylation plays a key role in microtubule severing by spastin (SPAST). SPAST preferentially recognizes and acts on microtubules decorated with short polyglutamate tails: severing activity by SPAST increases as the number of glutamates per tubulin rises from one to eight, but decreases beyond this glutamylation threshold. Post-translationally, phosphorylated on Ser-172 by CDK1 during the cell cycle, from metaphase to telophase, but not in interphase. This phosphorylation inhibits tubulin incorporation into microtubules.

Its subcellular location is the cytoplasm. The protein localises to the cytoskeleton. Functionally, tubulin is the major constituent of microtubules, a cylinder consisting of laterally associated linear protofilaments composed of alpha- and beta-tubulin heterodimers. Microtubules grow by the addition of GTP-tubulin dimers to the microtubule end, where a stabilizing cap forms. Below the cap, tubulin dimers are in GDP-bound state, owing to GTPase activity of alpha-tubulin. The sequence is that of Tubulin beta chain from Sus scrofa (Pig).